Reading from the N-terminus, the 846-residue chain is Protein kintoun (846 aa).

Disordered stretches follow at residues 1-21 (MSTA…ERAD), 372-416 (YLSR…PALT), 581-657 (HTSI…DSTI), and 743-846 (HDSS…DDEI). The residue at position 378 (Ser378) is a Phosphoserine. Positions 389-403 (PVEDDADGDMPETPE) are enriched in acidic residues. Basic residues-rich tracts occupy residues 596–612 (LHKK…KKQR) and 750–766 (QRKK…RAQQ). Ser770 carries the post-translational modification Phosphoserine. Basic and acidic residues predominate over residues 821–832 (TRQDHADADAKN).

Belongs to the PIH1 family. Kintoun subfamily. Interacts with Pp1alpha-96A, Pp1-87B, Pp1-13C and flw.

The protein localises to the cytoplasm. Its function is as follows. Required for cytoplasmic pre-assembly of axonemal dyneins, thereby playing a central role in motility in cilia and flagella. Involved in pre-assembly of dynein arm complexes in the cytoplasm before intraflagellar transport loads them for the ciliary compartment. The sequence is that of Protein kintoun from Drosophila persimilis (Fruit fly).